Consider the following 405-residue polypeptide: ATP-sensitive inward rectifier potassium channel 15 (405 aa).

At 1-90 the chain is on the cytoplasmic side; sequence MVARWVKGSE…LQDLWTTVID (90 aa). A helical transmembrane segment spans residues 91 to 117; the sequence is MKWRYKLTLFAATFVMTWFLFGVVYYA. Residues 118–143 lie on the Extracellular side of the membrane; the sequence is IAFIHGDLELGESNSNHTPCIMKVDS. Residues 144–160 constitute an intramembrane region (helical; Pore-forming); sequence LTGAFLFSLESQTTIGY. A Selectivity filter motif is present at residues 157 to 162; sequence TIGYGV. The Extracellular segment spans residues 161-169; it reads GVRSITEEC. Residues 170-195 traverse the membrane as a helical segment; the sequence is PHAIFLLVAQLVITTLIEIFITGTFL. The Cytoplasmic segment spans residues 196-405; it reads AKIARPKKRA…RSLLLQQSNV (210 aa).

This sequence belongs to the inward rectifier-type potassium channel (TC 1.A.2.1) family. KCNJ15 subfamily. As to quaternary structure, can form heteromultimeric channels with Kir5.1/KCNJ16. Interacts with PATJ.

The protein localises to the membrane. Its subcellular location is the cell membrane. It catalyses the reaction K(+)(in) = K(+)(out). Channel activity is regulated by variations of cytosolic pH; reversibly inhibited by acidic pH values. Inhibited by Ba(2+) and Cs(+) in a voltage-dependent manner. Functionally, inward rectifier potassium channels are characterized by a greater tendency to allow potassium to flow into the cell rather than out of it. Their voltage dependence is regulated by the concentration of extracellular potassium; as external potassium is raised, the voltage range of the channel opening shifts to more positive voltages. The inward rectification is mainly due to the blockage of outward current by internal magnesium. This is ATP-sensitive inward rectifier potassium channel 15 (Kcnj15) from Rattus norvegicus (Rat).